A 292-amino-acid polypeptide reads, in one-letter code: AT-hook motif nuclear-localized protein 23 (292 aa).

Residues 23–100 are disordered; it reads HLHHNSSSDD…SKNKPKPPVI (78 aa). A compositionally biased stretch (gly residues) spans 60–79; the sequence is SGGGSGSSGGGGGHGGGGDV. Residues 82 to 94 constitute a DNA-binding region (a.T hook); the sequence is RRPRGRPPGSKNK. Residues 106 to 242 enclose the PPC domain; that stretch reads ANTLRAHILE…EDEQQQQLGG (137 aa).

Its subcellular location is the nucleus. Functionally, transcription factor that specifically binds AT-rich DNA sequences related to the nuclear matrix attachment regions (MARs). This chain is AT-hook motif nuclear-localized protein 23, found in Arabidopsis thaliana (Mouse-ear cress).